The chain runs to 154 residues: 6,7-dimethyl-8-ribityllumazine synthase (154 aa).

5-amino-6-(D-ribitylamino)uracil contacts are provided by residues F23, 57 to 59 (AYE), and 81 to 83 (AVI). 86–87 (GT) contributes to the (2S)-2-hydroxy-3-oxobutyl phosphate binding site. Catalysis depends on H89, which acts as the Proton donor. Residue F114 participates in 5-amino-6-(D-ribitylamino)uracil binding. R128 provides a ligand contact to (2S)-2-hydroxy-3-oxobutyl phosphate.

Belongs to the DMRL synthase family. Forms an icosahedral capsid composed of 60 subunits, arranged as a dodecamer of pentamers.

It catalyses the reaction (2S)-2-hydroxy-3-oxobutyl phosphate + 5-amino-6-(D-ribitylamino)uracil = 6,7-dimethyl-8-(1-D-ribityl)lumazine + phosphate + 2 H2O + H(+). It functions in the pathway cofactor biosynthesis; riboflavin biosynthesis; riboflavin from 2-hydroxy-3-oxobutyl phosphate and 5-amino-6-(D-ribitylamino)uracil: step 1/2. Its function is as follows. Catalyzes the formation of 6,7-dimethyl-8-ribityllumazine by condensation of 5-amino-6-(D-ribitylamino)uracil with 3,4-dihydroxy-2-butanone 4-phosphate. This is the penultimate step in the biosynthesis of riboflavin. This is 6,7-dimethyl-8-ribityllumazine synthase from Acidithiobacillus ferrooxidans (strain ATCC 23270 / DSM 14882 / CIP 104768 / NCIMB 8455) (Ferrobacillus ferrooxidans (strain ATCC 23270)).